A 448-amino-acid polypeptide reads, in one-letter code: tRNA(Ile)-lysidine synthase (448 aa).

Residue 27–32 (SGGVDS) coordinates ATP.

It belongs to the tRNA(Ile)-lysidine synthase family.

The protein localises to the cytoplasm. It catalyses the reaction cytidine(34) in tRNA(Ile2) + L-lysine + ATP = lysidine(34) in tRNA(Ile2) + AMP + diphosphate + H(+). Functionally, ligates lysine onto the cytidine present at position 34 of the AUA codon-specific tRNA(Ile) that contains the anticodon CAU, in an ATP-dependent manner. Cytidine is converted to lysidine, thus changing the amino acid specificity of the tRNA from methionine to isoleucine. In Vibrio campbellii (strain ATCC BAA-1116), this protein is tRNA(Ile)-lysidine synthase.